Consider the following 110-residue polypeptide: UPF0060 membrane protein Veis_0342 (110 aa).

4 consecutive transmembrane segments (helical) span residues 8-28 (VLFTITAVVEIVGCYLPWLVI), 33-53 (PLWLLLPAALSLALFAWLLTL), 63-83 (AAYGGIYIAVALAWLHWVDGV), and 90-110 (VAGATVAMVGMLIIMLQPASA).

The protein belongs to the UPF0060 family.

The protein localises to the cell inner membrane. This is UPF0060 membrane protein Veis_0342 from Verminephrobacter eiseniae (strain EF01-2).